Here is a 627-residue protein sequence, read N- to C-terminus: MSLAWSAGRAWSRQSYAAPPAAAKTPPSELEARIAAIPIERYRNFCIVAHIDHGKSTLSDRLLEYTGTISASDANKQILDKLDVERERGITVKAQTCTMIHNHEGEDYLLHLVDTPGHVDFRAEVTRSYASCGGALLLVDATQGIQAQTVSNFHLAFAQDLALVPVVNKIDMPAADIPRVLEQMQNSFELDPKDAIMLSAKTGKGVPNVLPAVIERIPHPVGDEKKPLKMLLVDSWYDNFRGVVLLVRLFDGTIKTGDNVISLGTGMKYTVGQVGIQYPHATPTKVLRAGQVGYVYFNPGMKKIQDAKLGDTFTFVGAEDNVEPCPGFEEPKPMVFVAAFPTDQSDYSRLADSINQLVLNDRSVTLQKDFSEALGSGWRLGFLGSLHCSVFQDRLRQEHGKSVILTEPTVPSKIIWPDGSEEVVQNPALFPDVSHPRIRGAQLFEPFVTATITMPEEYLGRVIELCEANRGEQKSLEFFHTTQVILQYEIPAAQLVDDLFGKLKSATKGYATLDYEDSGWRQSHLVKLQLLVNRQPVDAICRVVHSSQVDRLGRQWVTKFKEHVDRQHFEVVIQATAGNRIVARETIKPFRKDVLAKLHAADVSRRRKLLEKQKEGRKRLRASFMSR.

The transit peptide at 1 to 16 (MSLAWSAGRAWSRQSY) directs the protein to the mitochondrion. The region spanning 40-221 (ERYRNFCIVA…AVIERIPHPV (182 aa)) is the tr-type G domain. Residues 49 to 56 (AHIDHGKS), 114 to 118 (DTPGH), and 168 to 171 (NKID) each bind GTP.

This sequence belongs to the TRAFAC class translation factor GTPase superfamily. Classic translation factor GTPase family. LepA subfamily.

The protein localises to the mitochondrion inner membrane. It carries out the reaction GTP + H2O = GDP + phosphate + H(+). Functionally, promotes mitochondrial protein synthesis. May act as a fidelity factor of the translation reaction, by catalyzing a one-codon backward translocation of tRNAs on improperly translocated ribosomes. Binds to mitochondrial ribosomes in a GTP-dependent manner. This Fusarium vanettenii (strain ATCC MYA-4622 / CBS 123669 / FGSC 9596 / NRRL 45880 / 77-13-4) (Fusarium solani subsp. pisi) protein is Translation factor GUF1, mitochondrial.